The following is a 284-amino-acid chain: MTAQLIDGKAIAASLRQQIAKRVAERRQQGLRTPGLAVILVGSDPASQVYVSHKRKDCEEVGFLSQAYDLPANTTQEDLAGLIDRLNDDPNIDGVLLQLPLPEHLDASLLLERIRPDKDVDGFHPYNVGRLAQRIPLLRPCTPKGIMTLLESTGADLYGMDAVVVGASNIVGRPMAMELLLAGCTVTVTHRFTKDLAGHVGRADLVVVAAGKPGLVKGEWIKEGAIVIDVGINRQDDGKLVGDVVYETALPRAGWITPVPGGVGPMTRACLLENTLYAAESLHS.

NADP(+)-binding positions include 166–168 (GAS) and Ile232.

Belongs to the tetrahydrofolate dehydrogenase/cyclohydrolase family. Homodimer.

It catalyses the reaction (6R)-5,10-methylene-5,6,7,8-tetrahydrofolate + NADP(+) = (6R)-5,10-methenyltetrahydrofolate + NADPH. The catalysed reaction is (6R)-5,10-methenyltetrahydrofolate + H2O = (6R)-10-formyltetrahydrofolate + H(+). Its pathway is one-carbon metabolism; tetrahydrofolate interconversion. Its function is as follows. Catalyzes the oxidation of 5,10-methylenetetrahydrofolate to 5,10-methenyltetrahydrofolate and then the hydrolysis of 5,10-methenyltetrahydrofolate to 10-formyltetrahydrofolate. The protein is Bifunctional protein FolD of Pseudomonas fluorescens (strain ATCC BAA-477 / NRRL B-23932 / Pf-5).